The chain runs to 217 residues: Ribosomal RNA small subunit methyltransferase G (217 aa).

Residues Gly-78, Phe-83, 129–130 (AE), and Arg-146 contribute to the S-adenosyl-L-methionine site.

The protein belongs to the methyltransferase superfamily. RNA methyltransferase RsmG family.

It is found in the cytoplasm. It catalyses the reaction guanosine(527) in 16S rRNA + S-adenosyl-L-methionine = N(7)-methylguanosine(527) in 16S rRNA + S-adenosyl-L-homocysteine. Its function is as follows. Specifically methylates the N7 position of guanine in position 527 of 16S rRNA. The sequence is that of Ribosomal RNA small subunit methyltransferase G from Geobacter sp. (strain M21).